Here is a 629-residue protein sequence, read N- to C-terminus: DNA topoisomerase 4 subunit B (629 aa).

Residues tyrosine 4, asparagine 41, aspartate 68, 109 to 115, and lysine 333 contribute to the ATP site; that span reads GLHGVGI. In terms of domain architecture, Toprim spans 411 to 524; the sequence is AELFLVEGDS…AGHVYVAMPP (114 aa). Mg(2+) contacts are provided by glutamate 417, aspartate 489, and aspartate 491.

Belongs to the type II topoisomerase family. ParE type 1 subfamily. In terms of assembly, heterotetramer composed of ParC and ParE. Requires Mg(2+) as cofactor. Mn(2+) serves as cofactor. The cofactor is Ca(2+).

It carries out the reaction ATP-dependent breakage, passage and rejoining of double-stranded DNA.. Topoisomerase IV is essential for chromosome segregation. It relaxes supercoiled DNA. Performs the decatenation events required during the replication of a circular DNA molecule. The protein is DNA topoisomerase 4 subunit B of Pseudomonas aeruginosa (strain ATCC 15692 / DSM 22644 / CIP 104116 / JCM 14847 / LMG 12228 / 1C / PRS 101 / PAO1).